Here is a 182-residue protein sequence, read N- to C-terminus: Capsid protein (182 aa).

Positions 1–25 (MSSAAQPMSRRARRRAARRALGSQP) are disordered.

The protein resides in the virion. Its function is as follows. Capsid protein self-assembles to form a quasi-spherical capsid, about 26 nm, or bacilliform. This Olive latent virus 2 (isolate Italy) (OLV-2) protein is Capsid protein.